Consider the following 74-residue polypeptide: UPF0346 protein RBAM_019500 (74 aa).

It belongs to the UPF0346 family.

The chain is UPF0346 protein RBAM_019500 from Bacillus velezensis (strain DSM 23117 / BGSC 10A6 / LMG 26770 / FZB42) (Bacillus amyloliquefaciens subsp. plantarum).